The following is a 321-amino-acid chain: Ferredoxin--NADP reductase (321 aa).

7 residues coordinate FAD: D34, Q42, Y47, V87, F119, D278, and T319.

Belongs to the ferredoxin--NADP reductase type 2 family. As to quaternary structure, homodimer. FAD serves as cofactor.

It catalyses the reaction 2 reduced [2Fe-2S]-[ferredoxin] + NADP(+) + H(+) = 2 oxidized [2Fe-2S]-[ferredoxin] + NADPH. This chain is Ferredoxin--NADP reductase, found in Streptococcus pneumoniae serotype 4 (strain ATCC BAA-334 / TIGR4).